The following is a 118-amino-acid chain: Class I hydrophobin hum2 (118 aa).

The first 19 residues, 1–19 (MQFKTIFATLAAFAAVASA), serve as a signal peptide directing secretion. 4 disulfide bridges follow: cysteine 33–cysteine 98, cysteine 40–cysteine 92, cysteine 41–cysteine 74, and cysteine 99–cysteine 112.

The protein belongs to the fungal hydrophobin family. In terms of assembly, self-assembles to form functional amyloid fibrils called rodlets. Self-assembly into fibrillar rodlets occurs spontaneously at hydrophobic:hydrophilic interfaces and the rodlets further associate laterally to form amphipathic monolayers.

It localises to the secreted. The protein localises to the cell wall. Functionally, aerial growth, conidiation, and dispersal of filamentous fungi in the environment rely upon a capability of their secreting small amphipathic proteins called hydrophobins (HPBs) with low sequence identity. Class I can self-assemble into an outermost layer of rodlet bundles on aerial cell surfaces, conferring cellular hydrophobicity that supports fungal growth, development and dispersal; whereas Class II form highly ordered films at water-air interfaces through intermolecular interactions but contribute nothing to the rodlet structure. Hum2 is a class I hydrophobin which that plays a role in, but seems not to be crucial for the formation of aerial hyphae. Hydrophobins of Mycosarcoma maydis have been functionally replaced, at least partially, by repellents. This Mycosarcoma maydis (Corn smut fungus) protein is Class I hydrophobin hum2.